The chain runs to 147 residues: Angiogenin (147 aa).

A signal peptide spans 1–24; it reads MVMGLGVLLLVFVLGLGLTPPTLA. Q25 bears the Pyrrolidone carboxylic acid mark. H37 serves as the catalytic Proton acceptor. Residues R45 and D46 each coordinate tRNA. 3 disulfide bridges follow: C50/C105, C63/C116, and C81/C131. Residues 55–59 carry the Nucleolar localization signal motif; it reads RRRGL. Positions 105 and 127 each coordinate tRNA. H138 (proton donor) is an active-site residue.

Belongs to the pancreatic ribonuclease family. As to quaternary structure, homodimer. Interacts with RNH1; inhibiting ANG ribonuclease activity. Interacts with PCNA.

Its subcellular location is the secreted. It localises to the nucleus. It is found in the nucleolus. The protein resides in the cytoplasm. The protein localises to the stress granule. Has weak tRNA ribonuclease activity by itself due to partial autoinhibition by its C-terminus, which folds into a short alpha-helix that partially occludes the substrate-binding site. In absence of stress, the ribonuclease activity is inhibited by RNH1 in the cytoplasm. In response to stress, dissociates from RNH1 in the cytoplasm and associates with cytoplasmic ribosomes with vacant A-sites: ribosomes directly activate the tRNA ribonuclease activity of ANG by refolding the C-terminal alpha-helix. In response to stress, the angiogenic activity of ANG is inhibited by RNH1 in the nucleus. Secreted ribonuclease that can either promote or restrict cell proliferation of target cells, depending on the context. Endocytosed in target cells via its receptor PLXNB2 and translocates to the cytoplasm or nucleus. Under stress conditions, localizes to the cytoplasm and promotes the assembly of stress granules (SGs): specifically cleaves a subset of tRNAs within anticodon loops to produce tRNA-derived stress-induced fragments (tiRNAs), resulting in translation repression and inhibition of cell proliferation. tiRNas also prevent formation of apoptosome, thereby promoting cell survival. Preferentially cleaves RNAs between a pyrimidine and an adenosine residue, suggesting that it cleaves the anticodon loop of tRNA(Ala) (32-UUAGCAU-38) after positions 33 and 36. Cleaves a subset of tRNAs, including tRNA(Ala), tRNA(Glu), tRNA(Gly), tRNA(Lys), tRNA(Val), tRNA(His), tRNA(Asp) and tRNA(Sec). Under growth conditions and in differentiated cells, translocates to the nucleus and stimulates ribosomal RNA (rRNA) transcription, including that containing the initiation site sequences of 45S rRNA, thereby promoting cell growth and proliferation. Angiogenin induces vascularization of normal and malignant tissues via its ability to promote rRNA transcription. Involved in hematopoietic stem and progenitor cell (HSPC) growth and survival by promoting rRNA transcription in growth conditions and inhibiting translation in response to stress, respectively. Mediates the crosstalk between myeloid and intestinal epithelial cells to protect the intestinal epithelial barrier integrity: secreted by myeloid cells and promotes intestinal epithelial cells proliferation and survival. Also mediates osteoclast-endothelial cell crosstalk in growing bone: produced by osteoclasts and protects the neighboring vascular cells against senescence by promoting rRNA transcription. This chain is Angiogenin (ANG), found in Pan troglodytes (Chimpanzee).